Consider the following 269-residue polypeptide: Shikimate dehydrogenase (NADP(+)) (269 aa).

Shikimate is bound by residues 17-19 and T64; that span reads SKS. The Proton acceptor role is filled by K68. D80 contacts NADP(+). Shikimate is bound by residues N89 and D105. NADP(+)-binding positions include 130 to 134, 154 to 159, and M213; these read GAGGA and NRTRAK. Shikimate is bound at residue Y215. G237 lines the NADP(+) pocket.

This sequence belongs to the shikimate dehydrogenase family. Homodimer.

The enzyme catalyses shikimate + NADP(+) = 3-dehydroshikimate + NADPH + H(+). It participates in metabolic intermediate biosynthesis; chorismate biosynthesis; chorismate from D-erythrose 4-phosphate and phosphoenolpyruvate: step 4/7. Its function is as follows. Involved in the biosynthesis of the chorismate, which leads to the biosynthesis of aromatic amino acids. Catalyzes the reversible NADPH linked reduction of 3-dehydroshikimate (DHSA) to yield shikimate (SA). This chain is Shikimate dehydrogenase (NADP(+)), found in Neisseria gonorrhoeae (strain ATCC 700825 / FA 1090).